A 299-amino-acid polypeptide reads, in one-letter code: Sulfate adenylyltransferase subunit 2 (299 aa).

The protein belongs to the PAPS reductase family. CysD subfamily. As to quaternary structure, sulfate-activating enzymes, NodP and NodQ, may be physically associated.

It carries out the reaction sulfate + ATP + H(+) = adenosine 5'-phosphosulfate + diphosphate. Its function is as follows. Proposed to provide activated sulfate for transfer to nod factor. This is Sulfate adenylyltransferase subunit 2 (nodP) from Rhizobium meliloti (strain 1021) (Ensifer meliloti).